The sequence spans 417 residues: DNA-directed RNA polymerase subunit beta (417 aa).

Belongs to the RNA polymerase beta chain family. In plastids the minimal PEP RNA polymerase catalytic core is composed of four subunits: alpha, beta, beta', and beta''. When a (nuclear-encoded) sigma factor is associated with the core the holoenzyme is formed, which can initiate transcription.

The protein resides in the plastid. It is found in the chloroplast. The enzyme catalyses RNA(n) + a ribonucleoside 5'-triphosphate = RNA(n+1) + diphosphate. Functionally, DNA-dependent RNA polymerase catalyzes the transcription of DNA into RNA using the four ribonucleoside triphosphates as substrates. In Saponaria officinalis (Common soapwort), this protein is DNA-directed RNA polymerase subunit beta (rpoB).